The primary structure comprises 1226 residues: Polyamine-transporting ATPase 13A3 (1226 aa).

Residues 1 to 28 (MDKEERKIINQGQEDEMEIYGYNLSRWK) lie on the Cytoplasmic side of the membrane. The stretch at 29–49 (LAIVSLGVICTGGFLLLLLYW) is an intramembrane region. The Cytoplasmic segment spans residues 50 to 205 (MPEWRVKATC…IAVKVPSVFK (156 aa)). Phosphoserine is present on Ser98. Residues 206–226 (LLIKEVLNPFYIFQLFSVILW) form a helical membrane-spanning segment. Over 227–232 (STDEYY) the chain is Lumenal. The chain crosses the membrane as a helical span at residues 233–253 (YYALAIVVMSIVSIVSSLYSI). Over 254-409 (RKQYVMLHDM…KPTDFKLYRD (156 aa)) the chain is Cytoplasmic. The helical transmembrane segment at 410–430 (AYLFLLCLVAVAGIGFIYTII) threads the bilayer. Over 431–448 (NSILNEVQVGVIIIESLD) the chain is Lumenal. Residues 449–469 (IITITVPPALPAAMTAGIVYA) traverse the membrane as a helical segment. The Cytoplasmic segment spans residues 470–940 (QRRLKKIGIF…ALITSFCVFK (471 aa)). Catalysis depends on Asp498, which acts as the 4-aspartylphosphate intermediate. Mg(2+) contacts are provided by Asp498 and Thr500. Residues 498-500 (DKT), Phe628, Arg684, and Asp750 contribute to the ATP site. A Phosphoserine modification is found at Ser817. A Mg(2+)-binding site is contributed by Asp883. Residue 883-887 (DGAND) participates in ATP binding. Residues 941–961 (FMALYSIIQYFSVTLLYSILS) traverse the membrane as a helical segment. Residue Asn962 is a topological domain, lumenal. The helical transmembrane segment at 963–983 (LGDFQFLFIDLAIILVVVFTM) threads the bilayer. The Cytoplasmic portion of the chain corresponds to 984 to 999 (SLNPAWKELVAQRPPS). Residues 1000–1020 (GLISGALLFSVLSQIIICIGF) form a helical membrane-spanning segment. The Lumenal portion of the chain corresponds to 1021-1073 (QSLGFFWVKQQPWYEVWHPKSDACNATGSLLWNSSHLDNETELDEHNIQNYEN). Residues 1074–1094 (TTVFFISSFQYLIVAIAFSKG) form a helical membrane-spanning segment. Residues 1095–1105 (KPFRQPCYKNY) are Cytoplasmic-facing. A helical membrane pass occupies residues 1106–1126 (FFVFSVIFLYVFILFIMLYPV). Topologically, residues 1127 to 1143 (ASVDQVLQIVCVPYQWR) are lumenal. A helical membrane pass occupies residues 1144–1164 (VTMLIIVLVNAFVSITVEESV). At 1165 to 1226 (DRWRKCCLPW…NGSCQIITIT (62 aa)) the chain is on the cytoplasmic side.

The protein belongs to the cation transport ATPase (P-type) (TC 3.A.3) family. Type V subfamily.

Its subcellular location is the recycling endosome membrane. The protein resides in the early endosome membrane. It is found in the late endosome membrane. The catalysed reaction is putrescine(out) + ATP + H2O = putrescine(in) + ADP + phosphate + H(+). Functionally, ATP-driven pump involved in endocytosis-dependent polyamine transport. Uses ATP as an energy source to transfer polyamine precursor putrescine from the endosomal compartment to the cytosol. The sequence is that of Polyamine-transporting ATPase 13A3 (ATP13A3) from Macaca fascicularis (Crab-eating macaque).